A 176-amino-acid chain; its full sequence is Ribosome maturation factor RimM (176 aa).

A PRC barrel domain is found at 97 to 176 (EDEFYWRDLI…QIIVDWDPDF (80 aa)).

The protein belongs to the RimM family. As to quaternary structure, binds ribosomal protein uS19.

The protein localises to the cytoplasm. Its function is as follows. An accessory protein needed during the final step in the assembly of 30S ribosomal subunit, possibly for assembly of the head region. Essential for efficient processing of 16S rRNA. May be needed both before and after RbfA during the maturation of 16S rRNA. It has affinity for free ribosomal 30S subunits but not for 70S ribosomes. This chain is Ribosome maturation factor RimM, found in Shewanella amazonensis (strain ATCC BAA-1098 / SB2B).